A 438-amino-acid polypeptide reads, in one-letter code: Putative ZDHHC-type palmitoyltransferase 7 (438 aa).

N-linked (GlcNAc...) asparagine glycosylation is found at Asn12 and Asn13. The next 2 helical transmembrane spans lie at 48–68 (IFCL…GTIL) and 77–97 (YFYL…YFLI). N-linked (GlcNAc...) asparagine glycosylation is found at Asn119, Asn144, and Asn157. The disordered stretch occupies residues 183-239 (EDSINDDTITTTTTTTTTTSTSTIPEISNDDDDNNNENNNDNVNNRNNNNSNGEKED). Low complexity-rich tracts occupy residues 190 to 206 (TITT…TSTI) and 218 to 234 (NENN…NNSN). Asn231 carries N-linked (GlcNAc...) asparagine glycosylation. The region spanning 249-299 (YFCKKCLVDIPLRTKHCVKCNRCVLKYDHHCVFIGGCVGLNNHKNFLLFLL) is the DHHC domain. 2 helical membrane passes run 294-314 (FLLF…IIVT) and 330-350 (IAII…FALF). N-linked (GlcNAc...) asparagine glycosylation is present at Asn360.

The protein belongs to the DHHC palmitoyltransferase family.

It is found in the membrane. The enzyme catalyses L-cysteinyl-[protein] + hexadecanoyl-CoA = S-hexadecanoyl-L-cysteinyl-[protein] + CoA. This is Putative ZDHHC-type palmitoyltransferase 7 from Dictyostelium discoideum (Social amoeba).